The chain runs to 1117 residues: A disintegrin and metalloproteinase with thrombospondin motifs 6 (1117 aa).

A signal peptide spans 1 to 21 (MEILWKTLTWILSLIMASSEF). A propeptide spanning residues 22-244 (HSDHRLSYSS…NTHIHHRQKR (223 aa)) is cleaved from the precursor. Residues N99, N172, N222, and N234 are each glycosylated (N-linked (GlcNAc...) asparagine). The Peptidase M12B domain occupies 250–468 (RFVETLVVAD…GRGTCLDNEP (219 aa)). 11 disulfides stabilise this stretch: C326-C387, C362-C369, C381-C463, C420-C447, C490-C512, C501-C519, C507-C542, C532-C547, C570-C607, C574-C612, and C585-C597. A Zn(2+)-binding site is contributed by H403. E404 is a catalytic residue. Residues H407 and H413 each contribute to the Zn(2+) site. Residues 495 to 557 (GATSRQCKYG…VPFGTWPQSI (63 aa)) form the Disintegrin domain. One can recognise a TSP type-1 1 domain in the interval 558–613 (DGGWGPWSLWGECSRTCGGGVSSSLRHCDSPAPSGGGKYCLGERKRYRSCNTDPCP). The interval 717–843 (DAIEGFFNDS…GSGDNEVGFT (127 aa)) is spacer. An N-linked (GlcNAc...) asparagine glycan is attached at N724. 4 TSP type-1 domains span residues 840–900 (VGFT…EPCP), 902–960 (EWFI…QSCP), 962–1007 (QWVA…SKPP), and 1018–1073 (PPPR…SKCD). Cystine bridges form between C911–C954, C915–C959, and C926–C943. An N-linked (GlcNAc...) asparagine glycan is attached at N956. Residues 1079–1117 (NTEECKDVNKVAYCPLVLKFKFCSRAYFRQMCCKTCQGH) enclose the PLAC domain.

Requires Zn(2+) as cofactor. Post-translationally, the precursor is cleaved by a furin endopeptidase. In terms of processing, glycosylated. Can be O-fucosylated by POFUT2 on a serine or a threonine residue found within the consensus sequence C1-X(2)-(S/T)-C2-G of the TSP type-1 repeat domains where C1 and C2 are the first and second cysteine residue of the repeat, respectively. Fucosylated repeats can then be further glycosylated by the addition of a beta-1,3-glucose residue by the glucosyltransferase, B3GALTL. Fucosylation mediates the efficient secretion of ADAMTS family members. Can also be C-glycosylated with one or two mannose molecules on tryptophan residues within the consensus sequence W-X-X-W of the TPRs, and N-glycosylated. These other glycosylations can also facilitate secretion. In terms of tissue distribution, expressed at low levels in placenta and barely detectable in a number of other tissues.

Its subcellular location is the secreted. It is found in the extracellular space. The protein resides in the extracellular matrix. This Homo sapiens (Human) protein is A disintegrin and metalloproteinase with thrombospondin motifs 6 (ADAMTS6).